Consider the following 410-residue polypeptide: Lipid droplet-regulating VLDL assembly factor AUP1 (410 aa).

Met1 is modified (N-acetylmethionine). Topologically, residues 1–20 are cytoplasmic; the sequence is MELPSGPGPERLFDSHRLPG. Phosphoserine is present on Ser5. Residues 21–41 lie within the membrane without spanning it; the sequence is DCFLLLVLLLYAPVGFCLLVL. Topologically, residues 42–410 are cytoplasmic; the sequence is RLFLGIHVFL…FTERRAQEAD (369 aa). The disordered stretch occupies residues 255 to 295; that stretch reads TGTRLTPADKAEHMKRQRHPRLRPQSAQSSFPPSPGPSPDV. Residues Ser288 and Ser292 each carry the phosphoserine modification. Residues 296-338 enclose the CUE domain; it reads QLATLAQRVKEVLPHVPLGVIQRDLAKTGCVDLTITNLLEGAV. The tract at residues 350 to 369 is disordered; the sequence is QSLPTASASKFPSSGPVTPQ. Residue Ser363 is modified to Phosphoserine. A Phosphothreonine modification is found at Thr367.

This sequence belongs to the AUP1 family. In terms of assembly, identified in a complex that contains SEL1L, OS9, FAF2/UBXD8, UBE2J1/UBC6E and AUP1. Interacts with the cytoplasmic tail of ITGA2B, ITGA1, ITGA2, ITGA5, ITGAV and ITGAM. Interacts (via C-terminus) with ubiquitin-conjugating enzyme UBE2G2; the interaction recruits UBE2G2 to lipid droplets. Interacts with ubiquitin ligases AMFR/gp78 and RNF139/TRC8; this promotes interaction of UBE2G2 with AMFR and RNF139. Interacts with apolipoprotein APOB. (Microbial infection) Interacts with Dengue virus NS4A; the interaction occurs in the presence of Dengue virus NS4B and induces lipophagy which facilitates production of virus progeny. In terms of processing, monoubiquitinated and diubiquitinated. Post-translationally, (Microbial infection) Not ubiquitinated following Dengue virus infection. Detected in blood platelets and leukocytes (at protein level). Ubiquitous. Highly expressed in placenta, liver, kidney, skeletal muscle, heart and brain.

The protein localises to the endoplasmic reticulum membrane. Its subcellular location is the lipid droplet. It is found in the cytoplasmic vesicle. It localises to the autophagosome. Its function is as follows. Plays a role in the translocation of terminally misfolded proteins from the endoplasmic reticulum lumen to the cytoplasm and their degradation by the proteasome. Plays a role in lipid droplet formation. Induces lipid droplet clustering. Recruits ubiquitin-conjugating enzyme UBE2G2 to lipid droplets which facilitates its interaction with ubiquitin ligases AMFR/gp78 and RNF139/TRC8, leading to sterol-induced ubiquitination of HMGCR and its subsequent proteasomal degradation. Also required for the degradation of INSIG1, SREBF1 and SREBF2. Plays a role in regulating assembly and secretion of very low density lipoprotein particles and stability of apolipoprotein APOB. (Microbial infection) Following Dengue virus infection, required for induction of lipophagy which facilitates production of virus progeny particles. The protein is Lipid droplet-regulating VLDL assembly factor AUP1 of Homo sapiens (Human).